The primary structure comprises 70 residues: Eglin C (70 aa).

It belongs to the protease inhibitor I13 (potato type I serine protease inhibitor) family.

Its function is as follows. Inhibits both elastase and cathepsin G. The chain is Eglin C from Hirudo medicinalis (Medicinal leech).